We begin with the raw amino-acid sequence, 58 residues long: Large ribosomal subunit protein bL32c (58 aa).

The protein belongs to the bacterial ribosomal protein bL32 family.

It localises to the plastid. Its subcellular location is the chloroplast. This chain is Large ribosomal subunit protein bL32c, found in Chaetosphaeridium globosum (Charophycean green alga).